We begin with the raw amino-acid sequence, 391 residues long: CBS domain-containing protein CBSX5 (391 aa).

2 consecutive CBS domains span residues 16 to 81 and 331 to 391; these read GKPP…DHDH and MARK…ENDM.

The polypeptide is CBS domain-containing protein CBSX5 (CBSX5) (Arabidopsis thaliana (Mouse-ear cress)).